The following is a 262-amino-acid chain: Hydroxyethylthiazole kinase (262 aa).

Residue methionine 43 coordinates substrate. ATP is bound by residues arginine 118 and threonine 164. Alanine 191 is a binding site for substrate.

The protein belongs to the Thz kinase family. Mg(2+) is required as a cofactor.

The enzyme catalyses 5-(2-hydroxyethyl)-4-methylthiazole + ATP = 4-methyl-5-(2-phosphooxyethyl)-thiazole + ADP + H(+). It functions in the pathway cofactor biosynthesis; thiamine diphosphate biosynthesis; 4-methyl-5-(2-phosphoethyl)-thiazole from 5-(2-hydroxyethyl)-4-methylthiazole: step 1/1. Catalyzes the phosphorylation of the hydroxyl group of 4-methyl-5-beta-hydroxyethylthiazole (THZ). This chain is Hydroxyethylthiazole kinase, found in Cereibacter sphaeroides (strain ATCC 17029 / ATH 2.4.9) (Rhodobacter sphaeroides).